A 387-amino-acid polypeptide reads, in one-letter code: Prostatic acid phosphatase (387 aa).

Residues 1–34 (MRNAALLMTRATSLRLSLLLLLSFLPDLDGGVRA) form the signal peptide. R45 lines the substrate pocket. The active-site Nucleophile is H46. R49 is a binding site for substrate. An N-linked (GlcNAc...) asparagine glycan is attached at N96. Position 113 (R113) interacts with substrate. 3 disulfides stabilise this stretch: C163–C374, C217–C315, and C349–C353. An N-linked (GlcNAc...) asparagine glycan is attached at N222. Residue H291 participates in substrate binding. The active-site Proton donor is the D292. N-linked (GlcNAc...) asparagine glycosylation is present at N335.

Belongs to the histidine acid phosphatase family. In terms of assembly, homodimer; dimer formation is required for phosphatase activity.

It localises to the secreted. It carries out the reaction a phosphate monoester + H2O = an alcohol + phosphate. The catalysed reaction is 1-(9Z-octadecenoyl)-sn-glycero-3-phosphate + H2O = 1-(9Z-octadecenoyl)-sn-glycerol + phosphate. It catalyses the reaction O-phospho-L-tyrosyl-[protein] + H2O = L-tyrosyl-[protein] + phosphate. Functionally, a non-specific tyrosine phosphatase that dephosphorylates a diverse number of substrates under acidic conditions (pH 4-6) including alkyl, aryl, and acyl orthophosphate monoesters and phosphorylated proteins. Has lipid phosphatase activity and inactivates lysophosphatidic acid in seminal plasma. The protein is Prostatic acid phosphatase (ACP3) of Bos taurus (Bovine).